Reading from the N-terminus, the 321-residue chain is G-protein coupled receptor homolog ECRF3 (321 aa).

Topologically, residues 1-34 (MEVKLDFSSEDFSNYSYNYSGDIYYGDVAPCVVN) are extracellular. 2 N-linked (GlcNAc...) asparagine; by host glycosylation sites follow: N14 and N18. Residues 35–51 (FLISESALAFIYVLMFL) traverse the membrane as a helical segment. Residues 52 to 76 (CNAIGNSLVLRTFLKYRAQAQSFDY) lie on the Cytoplasmic side of the membrane. Residues 77–93 (LMMGFCLNSLFLAGYLL) form a helical membrane-spanning segment. Over 94–124 (MRLLRMFEIFMNTELCKLEAFFLNLSIYWSP) the chain is Extracellular. N-linked (GlcNAc...) asparagine; by host glycosylation occurs at N117. The chain crosses the membrane as a helical span at residues 125 to 141 (FILVFISVLRCLLIFCA). Over 142–149 (TRLWVKKT) the chain is Cytoplasmic. The helical transmembrane segment at 150-166 (LIGQVFLCCSFVLACFG) threads the bilayer. The Extracellular segment spans residues 167-196 (ALPHVMVTSYYEPSSCIEEDGVLTEQLRTK). A helical transmembrane segment spans residues 197–215 (LNTFHTWYSFAGPLFITVI). Residues 216 to 234 (CYSMSCYKLFKTKLSKRAE) are Cytoplasmic-facing. A helical transmembrane segment spans residues 235–251 (VVTIITMTTLLFIVFCI). At 252–286 (PYYIMESIDTLLRVGVIEETCAKRSAIVYGIQCTY) the chain is on the extracellular side. Residues 287-303 (MLLVLYYCMLPLMFAMF) traverse the membrane as a helical segment. Over 304-321 (GSLFRQRMAAWCKTICHC) the chain is Cytoplasmic.

It belongs to the G-protein coupled receptor 1 family.

The protein localises to the host cell membrane. Functionally, may be highly relevant to the process of cellular transformation and rapid T-cell proliferation effected by HVS during latent infections of T-cells in susceptible hosts. The chain is G-protein coupled receptor homolog ECRF3 (74) from Saimiri sciureus (Common squirrel monkey).